A 256-amino-acid chain; its full sequence is Hemin import ATP-binding protein HmuV (256 aa).

The 237-residue stretch at 2 to 238 (ISAQNLVYSL…QALTMLYGAD (237 aa)) folds into the ABC transporter domain. 34-41 (GPNGAGKS) contacts ATP.

The protein belongs to the ABC transporter superfamily. Heme (hemin) importer (TC 3.A.1.14.5) family. As to quaternary structure, the complex is composed of two ATP-binding proteins (HmuV), two transmembrane proteins (HmuU) and a solute-binding protein (HmuT).

It is found in the cell inner membrane. Its function is as follows. Part of the ABC transporter complex HmuTUV involved in hemin import. Responsible for energy coupling to the transport system. This chain is Hemin import ATP-binding protein HmuV, found in Escherichia coli O6:K15:H31 (strain 536 / UPEC).